A 232-amino-acid polypeptide reads, in one-letter code: Thrombin-like enzyme bothrombin (232 aa).

Positions 1-223 (VIGGDECDIN…YLPWIQSIIA (223 aa)) constitute a Peptidase S1 domain. 6 cysteine pairs are disulfide-bonded: Cys7-Cys139, Cys26-Cys42, Cys74-Cys230, Cys118-Cys184, Cys150-Cys163, and Cys174-Cys199. Active-site charge relay system residues include His41 and Asp86. N-linked (GlcNAc...) asparagine glycosylation is found at Asn98 and Asn146. Ser178 serves as the catalytic Charge relay system. The N-linked (GlcNAc...) asparagine glycan is linked to Asn225.

This sequence belongs to the peptidase S1 family. Snake venom subfamily. In terms of assembly, monomer. Expressed by the venom gland.

It localises to the secreted. The enzyme catalyses Selective cleavage of Arg-|-Xaa bond in fibrinogen, to form fibrin, and release fibrinopeptide A. The specificity of further degradation of fibrinogen varies with species origin of the enzyme.. Its activity is regulated as follows. Inhibited by diisopropylfluorophosphate (DFP), but not by hirudin. Functionally, thrombin-like snake venom serine protease that clots fibrinogen by releasing fibrinopeptide A from the alpha chain of fibrinogen (FGA), induces platelet aggregation through its interaction with GPIb (GP1BA/GP1BB), and activates factor VIII (F8). The polypeptide is Thrombin-like enzyme bothrombin (Bothrops jararaca (Jararaca)).